The following is a 156-amino-acid chain: Small ribosomal subunit protein uS7 (156 aa).

Belongs to the universal ribosomal protein uS7 family. Part of the 30S ribosomal subunit. Contacts proteins S9 and S11.

Functionally, one of the primary rRNA binding proteins, it binds directly to 16S rRNA where it nucleates assembly of the head domain of the 30S subunit. Is located at the subunit interface close to the decoding center, probably blocks exit of the E-site tRNA. The chain is Small ribosomal subunit protein uS7 from Pseudarthrobacter chlorophenolicus (strain ATCC 700700 / DSM 12829 / CIP 107037 / JCM 12360 / KCTC 9906 / NCIMB 13794 / A6) (Arthrobacter chlorophenolicus).